The primary structure comprises 1142 residues: Probable serine/threonine-protein kinase fhkB (1142 aa).

Residues 1-16 are compositionally biased toward polar residues; sequence MSQDIQTQNSYSDELY. Disordered regions lie at residues 1–359, 374–404, and 432–451; these read MSQD…RLSQ, NTHT…KKQQ, and QIIG…QPPV. Composition is skewed to low complexity over residues 17–72 and 83–157; these read SSQI…FSQN and QNSY…PSSQ. The span at 158-178 shows a compositional bias: polar residues; the sequence is KRFFQSQNDDFVPSSQVTSLQ. Residues 186 to 302 are a coiled coil; it reads IQQQQQQQQQ…DYEQENDDDD (117 aa). The segment covering 187–260 has biased composition (low complexity); that stretch reads QQQQQQQQQQ…QQTQQQQQQP (74 aa). Composition is skewed to acidic residues over residues 261–277 and 283–325; these read QEDD…DNYE and EGEE…EEES. Over residues 333–348 the composition is skewed to low complexity; the sequence is RALQSRSSQSRPLLRS. The span at 374 to 397 shows a compositional bias: polar residues; sequence NTHTNQLGQSSQQTNSPNVHFNSL. Residues 393–434 adopt a coiled-coil conformation; the sequence is HFNSLQQKKKQQQQQQQQQQQQQQQQQQQQQQQQQQQSQQII. The span at 432 to 443 shows a compositional bias: low complexity; it reads QIIGSQSSQSSQ. The 72-residue stretch at 480-551 folds into the FHA domain; the sequence is IVVGRSSSCD…NGSYINGELI (72 aa). The region spanning 625-885 is the Protein kinase domain; it reads YYFVKEIGSG…IKEALNHPWF (261 aa). ATP is bound by residues 631 to 639 and lysine 654; that span reads IGSGGYGIV. Aspartate 747 serves as the catalytic Proton acceptor. The interval 947-1142 is disordered; the sequence is FDNNNNNNNN…HQQYTQHTTM (196 aa). Residues 949–1034 show a composition bias toward low complexity; that stretch reads NNNNNNNNNN…HNHNLNNHNH (86 aa). Positions 1035 to 1067 are enriched in basic residues; the sequence is NNNHHHNHNHNHNHNHNHNHNHNHNHNHNHNHN. Over residues 1068–1133 the composition is skewed to low complexity; it reads NHNNNNNNNN…NNINNNNNYH (66 aa). The stretch at 1090–1132 forms a coiled coil; sequence NNNNNNNNNNNNNNNNNNNNYYNNNINNINNNINNNINNNNNY.

The protein belongs to the protein kinase superfamily. CAMK Ser/Thr protein kinase family. CHK2 subfamily.

The enzyme catalyses L-seryl-[protein] + ATP = O-phospho-L-seryl-[protein] + ADP + H(+). The catalysed reaction is L-threonyl-[protein] + ATP = O-phospho-L-threonyl-[protein] + ADP + H(+). This Dictyostelium discoideum (Social amoeba) protein is Probable serine/threonine-protein kinase fhkB (fhkB).